The sequence spans 312 residues: tRNA pseudouridine synthase B (312 aa).

Asp-46 serves as the catalytic Nucleophile. Positions 74, 177, and 198 each coordinate substrate.

This sequence belongs to the pseudouridine synthase TruB family. Type 1 subfamily.

It carries out the reaction uridine(55) in tRNA = pseudouridine(55) in tRNA. Its function is as follows. Responsible for synthesis of pseudouridine from uracil-55 in the psi GC loop of transfer RNAs. The protein is tRNA pseudouridine synthase B of Buchnera aphidicola subsp. Acyrthosiphon pisum (strain APS) (Acyrthosiphon pisum symbiotic bacterium).